The chain runs to 324 residues: DNA repair and recombination protein RadA (324 aa).

An ATP-binding site is contributed by 114–121 (GEFGSGKT).

This sequence belongs to the eukaryotic RecA-like protein family.

Its function is as follows. Involved in DNA repair and in homologous recombination. Binds and assemble on single-stranded DNA to form a nucleoprotein filament. Hydrolyzes ATP in a ssDNA-dependent manner and promotes DNA strand exchange between homologous DNA molecules. This chain is DNA repair and recombination protein RadA, found in Sulfurisphaera tokodaii (strain DSM 16993 / JCM 10545 / NBRC 100140 / 7) (Sulfolobus tokodaii).